The sequence spans 272 residues: MTGSQEDQPKIIIDQEQPKTLETEHQPEPSSSSPDQKKWGTHVMGAPAAPVAHPDNQQAAAWVAGDNQQTQYQPYVIYSPVEHPTTNNPLEPVIGMFHTWSRKAETVARNLWHNLKTGPSMSETAWGKVNLTAKAITKGGFESLFRQIFGTEPNETLKKTFACYLSTTTGPVAGTVYLSNARVAFCSDRPLYFTAPSGQESWSYYRVVVPLANVATVNPVVVKETPPEKYIQLTTVDGHDFWFMGFVNYEKATHHLLTSVSDFQTAHGSVSG.

The interval methionine 1–histidine 42 is disordered. A compositionally biased stretch (basic and acidic residues) spans glutamate 16–proline 27. The GRAM domain maps to serine 143–valine 221.

This sequence belongs to the GEM family.

The protein is GEM-like protein 5 of Arabidopsis thaliana (Mouse-ear cress).